A 127-amino-acid chain; its full sequence is Glycine cleavage system H protein 1 (127 aa).

The Lipoyl-binding domain maps to 20–101 (SVTVGITAYA…MGEGWFFRFI (82 aa)). K60 bears the N6-lipoyllysine mark.

The protein belongs to the GcvH family. As to quaternary structure, the glycine cleavage system is composed of four proteins: P, T, L and H. Requires (R)-lipoate as cofactor.

The glycine cleavage system catalyzes the degradation of glycine. The H protein shuttles the methylamine group of glycine from the P protein to the T protein. This Pseudomonas putida (strain ATCC 47054 / DSM 6125 / CFBP 8728 / NCIMB 11950 / KT2440) protein is Glycine cleavage system H protein 1.